Here is a 683-residue protein sequence, read N- to C-terminus: Outer dynein arm-docking complex subunit 4 (683 aa).

TPR repeat units lie at residues 13–46 (FPSY…QSGD), 47–80 (KNCL…DPTF), 48–80 (NCLV…DPTF), and 81–114 (CKGI…RPDR). The disordered stretch occupies residues 158 to 179 (QQKPHPVRQLIHHPKRESKRKG). The span at 167–179 (LIHHPKRESKRKG) shows a compositional bias: basic residues. TPR repeat units lie at residues 275–311 (LKSL…NKEE), 320–353 (GNLY…AKEY), 360–393 (SRAL…AKTT), 397–430 (TWLF…AEEE), and 437–470 (LNAS…AKLV). 2 disordered regions span residues 510 to 537 (ENAT…PEKV) and 553 to 683 (VLSK…EPIE). Composition is skewed to basic and acidic residues over residues 521 to 537 (TAKE…PEKV), 566 to 590 (PEQR…ERGP), 602 to 620 (GRTE…RPSE), and 629 to 675 (SSPR…IEKD). Residues 592–625 (DTAKGQFGEAGRTEQNREETREIYRRPSELDQNL) form a TPR 15 repeat.

In terms of assembly, component of the outer dynein arm-docking complex along with ODAD1, ODAD2 and ODAD3. Interacts with ODAD1; this interaction may facilitate the recruitment and/or attachment of outer dynein arm docking complex proteins, including ODAD1, ODAD3 and ODAD2, to ciliary axonemes. Interacts with components of the IFT complex A, including IFT140, TTC21B/IFT139 and WDR19/IFT144, and the IFT complex B, including IFT46, IFT52 and IFT57. Interacts with CFAP53. Expressed in trachea multiciliated cells.

It localises to the cytoplasm. It is found in the cytoskeleton. The protein localises to the cilium axoneme. Functionally, component of the outer dynein arm-docking complex (ODA-DC) that mediates outer dynein arms (ODA) binding onto the doublet microtubule. Plays an essential role for the assembly of ODA-DC and for the docking of ODA in ciliary axoneme. The protein is Outer dynein arm-docking complex subunit 4 of Bos taurus (Bovine).